The primary structure comprises 302 residues: N-acetylaspartate synthetase (302 aa).

Residues 46–60 show a composition bias toward pro residues; sequence PGPAAAPPAPPPAPV. The tract at residues 46 to 72 is disordered; sequence PGPAAAPPAPPPAPVAQPHGGAGGAGP. A helical transmembrane segment spans residues 121–141; it reads YALLAALCFAVSRSLLLTCLV. An N-acetyltransferase domain is found at 143–283; the sequence is AALLGLRYYY…VLPGMTLSLA (141 aa).

This sequence belongs to the NAT8 family. As to expression, expressed in brain.

It is found in the cytoplasm. It localises to the microsome membrane. The protein resides in the mitochondrion membrane. The protein localises to the endoplasmic reticulum membrane. The catalysed reaction is L-aspartate + acetyl-CoA = N-acetyl-L-aspartate + CoA + H(+). Aminooxyacetic acid (AOAA) blocks its activity in both cytoplasm and mitochondria. In terms of biological role, catalyzes the synthesis of N-acetylaspartate acid (NAA) from L-aspartate and acetyl-CoA. Promotes dopamine uptake by regulating TNF-alpha expression. Attenuates methamphetamine-induced inhibition of dopamine uptake. In Homo sapiens (Human), this protein is N-acetylaspartate synthetase.